Reading from the N-terminus, the 381-residue chain is MAINIRKTHPLLKIMNHALIDLPAPSNISLWWNFGSLLGLCLIIQILTGLFLAMHYTADISMAFSSVVHICRDVNYGWLIRNIHANGASLFFICVYLHIARGLYYGSYLYKETWNIGVILLFLLMATAFVGYVLPWGQMSFWGATVITNLLSAFPYIGNMLVQWIWGGFSVDNATLTRFFAFHFLLPFLILALTVIHLLFLHETGSNNPLGINSDADKISFHPYFSYKDLLGFFVMIFLLATLALFTPNLLGDAENFIPANPLVTPPHIKPEWYFLFAYAILRSIPNKLGGVLALLFSIFILMLVPLLHTSKQRSIIFRPLTQIFFWFLVANSIILTWIGGQPVEQPFIMVGQIASISYFSLFLIIMPFTSWCENKILSLN.

4 consecutive transmembrane segments (helical) span residues 34–54 (FGSL…FLAM), 78–99 (WLIR…YLHI), 114–134 (WNIG…GYVL), and 179–199 (FFAF…IHLL). Positions 84 and 98 each coordinate heme b. H183 and H197 together coordinate heme b. H202 contributes to the a ubiquinone binding site. The next 4 membrane-spanning stretches (helical) occupy residues 227–247 (YKDL…ALFT), 289–309 (LGGV…PLLH), 321–341 (LTQI…WIGG), and 348–368 (FIMV…IIMP).

Belongs to the cytochrome b family. In terms of assembly, the cytochrome bc1 complex contains 3 respiratory subunits (MT-CYB, CYC1 and UQCRFS1), 2 core proteins (UQCRC1 and UQCRC2) and probably 6 low-molecular weight proteins. Heme b is required as a cofactor.

It localises to the mitochondrion inner membrane. In terms of biological role, component of the ubiquinol-cytochrome c reductase complex (complex III or cytochrome b-c1 complex) that is part of the mitochondrial respiratory chain. The b-c1 complex mediates electron transfer from ubiquinol to cytochrome c. Contributes to the generation of a proton gradient across the mitochondrial membrane that is then used for ATP synthesis. The protein is Cytochrome b (mt-cyb) of Negaprion brevirostris (Lemon shark).